Reading from the N-terminus, the 179-residue chain is Ribosome-recycling factor (179 aa).

Belongs to the RRF family.

The protein localises to the cytoplasm. In terms of biological role, responsible for the release of ribosomes from messenger RNA at the termination of protein biosynthesis. May increase the efficiency of translation by recycling ribosomes from one round of translation to another. In Chlamydia trachomatis serovar A (strain ATCC VR-571B / DSM 19440 / HAR-13), this protein is Ribosome-recycling factor.